Here is a 460-residue protein sequence, read N- to C-terminus: Cysteine--tRNA ligase (460 aa).

Zn(2+) is bound at residue Cys28. The short motif at 30 to 40 (MTVYDYCHLGH) is the 'HIGH' region element. Zn(2+) contacts are provided by Cys209, His234, and Glu238. Residues 266-270 (KMSKS) carry the 'KMSKS' region motif. Lys269 is a binding site for ATP.

The protein belongs to the class-I aminoacyl-tRNA synthetase family. Monomer. The cofactor is Zn(2+).

The protein resides in the cytoplasm. The catalysed reaction is tRNA(Cys) + L-cysteine + ATP = L-cysteinyl-tRNA(Cys) + AMP + diphosphate. This chain is Cysteine--tRNA ligase, found in Pseudomonas aeruginosa (strain LESB58).